We begin with the raw amino-acid sequence, 445 residues long: Methionine aminopeptidase 2-2 (445 aa).

The segment at 1–92 is disordered; the sequence is MAAQASEDLK…RVPISQLFPN (92 aa). Low complexity predominate over residues 18-33; sequence AGDSKAAAATAGQAEA. Over residues 34–46 the composition is skewed to acidic residues; the sequence is GEAEDDSDDDEVD. Over residues 47-58 the composition is skewed to low complexity; it reads GNAAPEGAASGA. Residues 59-74 are compositionally biased toward basic residues; it reads AKKKKKRKPKKKKKGG. His198 contacts substrate. Asp218, Asp229, and His298 together coordinate a divalent metal cation. His306 contributes to the substrate binding site. A divalent metal cation contacts are provided by Glu331 and Glu426.

This sequence belongs to the peptidase M24A family. Methionine aminopeptidase eukaryotic type 2 subfamily. Requires Co(2+) as cofactor. It depends on Zn(2+) as a cofactor. Mn(2+) is required as a cofactor. Fe(2+) serves as cofactor.

The protein resides in the cytoplasm. It catalyses the reaction Release of N-terminal amino acids, preferentially methionine, from peptides and arylamides.. In terms of biological role, cotranslationally removes the N-terminal methionine from nascent proteins. The N-terminal methionine is often cleaved when the second residue in the primary sequence is small and uncharged (Met-Ala-, Cys, Gly, Pro, Ser, Thr, or Val). This Aspergillus terreus (strain NIH 2624 / FGSC A1156) protein is Methionine aminopeptidase 2-2.